Consider the following 382-residue polypeptide: Beta-1,4-galactosyltransferase 6 (382 aa).

At methionine 1–leucine 15 the chain is on the cytoplasmic side. Residues isoleucine 16–alanine 35 form a helical; Signal-anchor for type II membrane protein membrane-spanning segment. Topologically, residues proline 36–tyrosine 382 are lumenal. Residues asparagine 71, asparagine 75, asparagine 83, asparagine 84, asparagine 99, and asparagine 122 are each glycosylated (N-linked (GlcNAc...) asparagine). Cysteine 108 and cysteine 152 form a disulfide bridge. Residues proline 163–arginine 167, phenylalanine 202–arginine 204, valine 229–aspartate 230, tyrosine 258, and tryptophan 290 each bind UDP-alpha-D-galactose. Cysteines 223 and 242 form a disulfide. Position 230 (aspartate 230) interacts with Mn(2+). Glycine 292 to aspartate 295 contributes to the N-acetyl-D-glucosamine binding site. Asparagine 307 is a glycosylation site (N-linked (GlcNAc...) asparagine). Position 323 (histidine 323) interacts with Mn(2+). Histidine 323–histidine 324 is a binding site for UDP-alpha-D-galactose. Residue arginine 334 participates in N-acetyl-D-glucosamine binding. Residue asparagine 367 is glycosylated (N-linked (GlcNAc...) asparagine).

It belongs to the glycosyltransferase 7 family. Requires Mn(2+) as cofactor. It depends on Mg(2+) as a cofactor. Ca(2+) is required as a cofactor. As to expression, highest expression in brain with lower levels found in lungs, heart, skeletal muscle and kidney. Lowest expression in testis, liver and spleen.

It localises to the golgi apparatus. It is found in the golgi stack membrane. It catalyses the reaction a beta-D-glucosyl-(1&lt;-&gt;1')-N-acylsphing-4-enine + UDP-alpha-D-galactose = a beta-D-Gal-(1-&gt;4)-beta-D-Glc-(1&lt;-&gt;1)-Cer(d18:1(4E)) + UDP + H(+). Its pathway is protein modification; protein glycosylation. It functions in the pathway sphingolipid metabolism. With respect to regulation, inhibited by EDTA. Its function is as follows. Catalyzes the synthesis of lactosylceramide (LacCer) via the transfer of galactose from UDP-galactose to glucosylceramide (GlcCer). LacCer is the starting point in the biosynthesis of all gangliosides (membrane-bound glycosphingolipids) which play pivotal roles in the CNS including neuronal maturation and axonal and myelin formation. The chain is Beta-1,4-galactosyltransferase 6 from Rattus norvegicus (Rat).